A 391-amino-acid polypeptide reads, in one-letter code: 3-ketoacyl-CoA thiolase (391 aa).

The Acyl-thioester intermediate role is filled by Cys-95. Catalysis depends on proton acceptor residues His-347 and Cys-377.

This sequence belongs to the thiolase-like superfamily. Thiolase family. Heterotetramer of two alpha chains (FadB) and two beta chains (FadA).

The protein localises to the cytoplasm. It carries out the reaction an acyl-CoA + acetyl-CoA = a 3-oxoacyl-CoA + CoA. It functions in the pathway lipid metabolism; fatty acid beta-oxidation. In terms of biological role, catalyzes the final step of fatty acid oxidation in which acetyl-CoA is released and the CoA ester of a fatty acid two carbons shorter is formed. The polypeptide is 3-ketoacyl-CoA thiolase (Saccharophagus degradans (strain 2-40 / ATCC 43961 / DSM 17024)).